The primary structure comprises 604 residues: Kelch-like protein 15 (604 aa).

The BTB domain occupies 31-98; sequence LDVTLLIEEH…MYYGSLELSM (68 aa). One can recognise a BACK domain in the interval 133–237; that stretch reads CAEVMRLLED…TPANIFEKVK (105 aa). Kelch repeat units follow at residues 328 to 379, 381 to 426, 428 to 473, 489 to 542, and 544 to 592; these read FAFL…VIGK, IYAV…VLNG, LYIT…NKSK, KLYV…VLDK, and IMVL…SLHF.

The protein localises to the nucleus. Its pathway is protein modification; protein ubiquitination. Its function is as follows. Substrate-specific adapter for an E3 ubiquitin-protein ligase complex. The polypeptide is Kelch-like protein 15 (klhl15) (Danio rerio (Zebrafish)).